The chain runs to 289 residues: Inorganic pyrophosphatase (289 aa).

Serine 2 is subject to N-acetylserine. An N6-acetyllysine modification is found at lysine 57. Mg(2+) contacts are provided by aspartate 116, aspartate 121, and aspartate 153. Lysine 228 carries the N6-acetyllysine modification. Serine 250 is subject to Phosphoserine.

The protein belongs to the PPase family. Homodimer. It depends on Mg(2+) as a cofactor.

It localises to the cytoplasm. The catalysed reaction is diphosphate + H2O = 2 phosphate + H(+). This Pongo abelii (Sumatran orangutan) protein is Inorganic pyrophosphatase (PPA1).